Reading from the N-terminus, the 117-residue chain is MSSHVPADMINLRLILVSGKTKEFLFSPNDSASDIAKHVYDNWPMDWEEEQVSSPNILRLIYQGRFLHGNVTLGALKLPFGKTTVMHLVARETLPEPNSQGQRNREKTGESNCCVIL.

The region spanning 10–88 (INLRLILVSG…PFGKTTVMHL (79 aa)) is the Ubiquitin-like domain. Residue C113 is the site of S-palmitoyl cysteine attachment. At C114 the chain carries Cysteine methyl ester. The S-geranylgeranyl cysteine moiety is linked to residue C114. Residues 115-117 (VIL) constitute a propeptide, removed in mature form.

The protein localises to the cell membrane. The sequence is that of Ubiquitin-like protein 3 (Ubl3) from Mus musculus (Mouse).